The primary structure comprises 312 residues: Short-chain dehydrogenase/reductase pkfC (312 aa).

Lys56, Asn108, and Lys140 together coordinate NADP(+). Catalysis depends on Ser164, which acts as the Proton donor. NADP(+)-binding residues include Tyr193 and Lys197. Tyr193 acts as the Proton acceptor in catalysis. The active-site Lowers pKa of active site Tyr is the Lys197.

The protein belongs to the short-chain dehydrogenases/reductases (SDR) family.

It functions in the pathway secondary metabolite biosynthesis. In terms of biological role, short-chain dehydrogenase/reductase; part of the gene cluster that mediates the biosynthesis of aspernidine A, a prenylated isoindolinone. The starting point of the biosynthesis of aspernidin A is the production of orsellinaldehyde by the non-reducing polyketide synthase pkfA. Hydroxylation, methylation of one of the phenol groups, and prenylation, presumably catalyzed by the prenyltransferase pkfE, would be needed to yield aspernidine D. Subsequently, the cytochrome P450 monooxygenase pkfB is responsible for hydroxylation of aspernidine D to yield aspernidine E. The dehydrogenase pkfF may be responsible for further oxidation of aspernidine E to form a dialdehyde intermediate which is further transformed in a series of steps, some of which are enzyme-mediated, to generate aspernidine A. The possibility that additional enzymes outside of the cluster are involved in aspernidine A biosynthesis cannot be excluded. The protein is Short-chain dehydrogenase/reductase pkfC of Emericella nidulans (strain FGSC A4 / ATCC 38163 / CBS 112.46 / NRRL 194 / M139) (Aspergillus nidulans).